The chain runs to 102 residues: Small ribosomal subunit protein eS24 (102 aa).

It belongs to the eukaryotic ribosomal protein eS24 family.

In Methanococcus maripaludis (strain C5 / ATCC BAA-1333), this protein is Small ribosomal subunit protein eS24.